The following is a 1219-amino-acid chain: Regulator of telomere elongation helicase 1 (1219 aa).

One can recognise a Helicase ATP-binding domain in the interval 7-296; sequence NGVTVDFPFQ…TKAAQQGEPH (290 aa). 42 to 49 provides a ligand contact to ATP; sequence SPTGTGKT. Residues cysteine 145, cysteine 163, cysteine 172, and cysteine 207 each coordinate [4Fe-4S] cluster. Positions 151-167 match the Nuclear localization signal motif; that stretch reads KKQESNHLQIHLCRKKV. Residues 250-253 carry the DEAH box motif; the sequence is DEAH. Disordered regions lie at residues 287–306, 757–786, 839–877, 979–1005, 1017–1054, 1132–1151, and 1159–1219; these read TKAAQQGEPHPEFSADSPSP, PAPAPRATAPSVRGEDAVSEAKSPGPFFST, EHSEQRAGSPGEEQAHSCSTLSLLSEKRPAEEPRGGRKK, RPEHSIPRRQRAQPVLDPTGRTAPDPK, DPQEHLNQGRPHLSPRPPPTGDPGSQPQWGSGVPRAGK, CTDLTGRPYPGMEPPGPQEE, and LTHR…EWGL. The segment covering 757 to 766 has biased composition (low complexity); the sequence is PAPAPRATAP. The span at 863 to 873 shows a compositional bias: basic and acidic residues; it reads SEKRPAEEPRG. The short motif at 871 to 877 is the Nuclear localization signal element; that stretch reads PRGGRKK. The span at 1176-1185 shows a compositional bias: polar residues; that stretch reads KTQSKISSFL. A PIP-box motif is present at residues 1178–1185; it reads QSKISSFL. A compositionally biased stretch (low complexity) spans 1200-1219; it reads AGPSQSSGPPHGPAASEWGL.

The protein belongs to the helicase family. RAD3/XPD subfamily. In terms of assembly, interacts with TERF1. Interacts (via PIP-box) with PCNA; the interaction is direct and essential for suppressing telomere fragility. Interacts with MMS19; the interaction mediates the association of RTEL1 with the cytosolic iron-sulfur protein assembly (CIA) complex.

It localises to the nucleus. The enzyme catalyses ATP + H2O = ADP + phosphate + H(+). A probable ATP-dependent DNA helicase implicated in telomere-length regulation, DNA repair and the maintenance of genomic stability. Acts as an anti-recombinase to counteract toxic recombination and limit crossover during meiosis. Regulates meiotic recombination and crossover homeostasis by physically dissociating strand invasion events and thereby promotes noncrossover repair by meiotic synthesis dependent strand annealing (SDSA) as well as disassembly of D loop recombination intermediates. Also disassembles T loops and prevents telomere fragility by counteracting telomeric G4-DNA structures, which together ensure the dynamics and stability of the telomere. The polypeptide is Regulator of telomere elongation helicase 1 (Homo sapiens (Human)).